We begin with the raw amino-acid sequence, 425 residues long: UPF0761 membrane protein PXO_04555 (425 aa).

The next 6 membrane-spanning stretches (helical) occupy residues 48 to 68, 105 to 125, 154 to 174, 182 to 202, 219 to 239, and 250 to 270; these read VFAL…FPAF, FTVA…HSIE, GTML…LPLF, LAEF…IVLI, GALL…VYLG, and ALSA…SVLL.

The protein belongs to the UPF0761 family.

It is found in the cell inner membrane. This Xanthomonas oryzae pv. oryzae (strain PXO99A) protein is UPF0761 membrane protein PXO_04555.